Reading from the N-terminus, the 343-residue chain is L-idonate 5-dehydrogenase (NAD(P)(+)) (343 aa).

Cys40, His65, Cys93, Cys96, Cys99, Cys107, and Glu153 together coordinate Zn(2+).

The protein belongs to the zinc-containing alcohol dehydrogenase family. The cofactor is Zn(2+).

The catalysed reaction is L-idonate + NADP(+) = 5-dehydro-D-gluconate + NADPH + H(+). It carries out the reaction L-idonate + NAD(+) = 5-dehydro-D-gluconate + NADH + H(+). It participates in carbohydrate acid metabolism; L-idonate degradation. Functionally, catalyzes the NADH/NADPH-dependent oxidation of L-idonate to 5-ketogluconate (5KG). The protein is L-idonate 5-dehydrogenase (NAD(P)(+)) (idnD) of Escherichia coli (strain K12).